Here is a 498-residue protein sequence, read N- to C-terminus: tRNA-guanine(15) transglycosylase (498 aa).

Asp-85 functions as the Nucleophile in the catalytic mechanism. Asp-120 provides a ligand contact to substrate. Positions 275, 277, and 280 each coordinate Zn(2+).

It belongs to the archaeosine tRNA-ribosyltransferase family. It depends on Zn(2+) as a cofactor.

The catalysed reaction is guanosine(15) in tRNA + 7-cyano-7-deazaguanine = 7-cyano-7-carbaguanosine(15) in tRNA + guanine. Its pathway is tRNA modification; archaeosine-tRNA biosynthesis. Its function is as follows. Exchanges the guanine residue with 7-cyano-7-deazaguanine (preQ0) at position 15 in the dihydrouridine loop (D-loop) of archaeal tRNAs. The polypeptide is tRNA-guanine(15) transglycosylase (Sulfolobus acidocaldarius (strain ATCC 33909 / DSM 639 / JCM 8929 / NBRC 15157 / NCIMB 11770)).